The primary structure comprises 553 residues: Transcription factor IIIB 70 kDa subunit (553 aa).

The TFIIB-type zinc finger occupies 6–39 (KQQKCKTCGHTQFDVNRYTAAGDVSCLRCGTVLE). Zn(2+) is bound by residues C10, C13, C31, and C34. A run of 2 repeats spans residues 98–174 (IAAA…KMVK) and 193–272 (FVEK…EFKK). The tract at residues 98–272 (IAAALKIPDY…LQRRLNEFKK (175 aa)) is interaction with TBP and with the Pol III subunit C34. The segment at 281-553 (KSFREVENLE…KGLLGGNMGF (273 aa)) is interaction with TBP. The interval 473-523 (KQEADELTGNTSKSSSGNRRKRNKSSLPAELRKELGDIDLDEDGTPRSAAD) is disordered. Low complexity predominate over residues 480-489 (TGNTSKSSSG).

Belongs to the TFIIB family. In terms of assembly, TFIIIB comprises the TATA-binding protein (TBP), the B-related factor (BRF) and a 70 kDa polypeptide.

Its subcellular location is the nucleus. Its function is as follows. General activator of RNA polymerase III transcription. Interacts with TBP. Binds to Pol III subunit C34 and to the TAU135 component of TFIIIC. The polypeptide is Transcription factor IIIB 70 kDa subunit (TDS4) (Candida albicans (strain SC5314 / ATCC MYA-2876) (Yeast)).